The chain runs to 263 residues: Phosphatidylglycerol--prolipoprotein diacylglyceryl transferase (263 aa).

The next 4 membrane-spanning stretches (helical) occupy residues 10–30, 56–76, 91–111, and 117–137; these read VAIT…LFGF, MVTY…ILFY, IWNG…AMWL, and GLGF…GLFF. A 1,2-diacyl-sn-glycero-3-phospho-(1'-sn-glycerol) is bound at residue Arg-139. A run of 3 helical transmembrane segments spans residues 171–191, 199–219, and 231–251; these read PSQL…LWVF, GHVS…VEFV, and FGWL…GLWL.

This sequence belongs to the Lgt family.

It localises to the cell inner membrane. It carries out the reaction L-cysteinyl-[prolipoprotein] + a 1,2-diacyl-sn-glycero-3-phospho-(1'-sn-glycerol) = an S-1,2-diacyl-sn-glyceryl-L-cysteinyl-[prolipoprotein] + sn-glycerol 1-phosphate + H(+). It participates in protein modification; lipoprotein biosynthesis (diacylglyceryl transfer). Functionally, catalyzes the transfer of the diacylglyceryl group from phosphatidylglycerol to the sulfhydryl group of the N-terminal cysteine of a prolipoprotein, the first step in the formation of mature lipoproteins. This chain is Phosphatidylglycerol--prolipoprotein diacylglyceryl transferase, found in Nitratidesulfovibrio vulgaris (strain ATCC 29579 / DSM 644 / CCUG 34227 / NCIMB 8303 / VKM B-1760 / Hildenborough) (Desulfovibrio vulgaris).